The primary structure comprises 319 residues: Acetyl-coenzyme A carboxylase carboxyl transferase subunit alpha (319 aa).

A CoA carboxyltransferase C-terminal domain is found at 35–296 (DLDKEIEQLE…KATLLRQLED (262 aa)).

Belongs to the AccA family. As to quaternary structure, acetyl-CoA carboxylase is a heterohexamer composed of biotin carboxyl carrier protein (AccB), biotin carboxylase (AccC) and two subunits each of ACCase subunit alpha (AccA) and ACCase subunit beta (AccD).

Its subcellular location is the cytoplasm. It carries out the reaction N(6)-carboxybiotinyl-L-lysyl-[protein] + acetyl-CoA = N(6)-biotinyl-L-lysyl-[protein] + malonyl-CoA. The protein operates within lipid metabolism; malonyl-CoA biosynthesis; malonyl-CoA from acetyl-CoA: step 1/1. Component of the acetyl coenzyme A carboxylase (ACC) complex. First, biotin carboxylase catalyzes the carboxylation of biotin on its carrier protein (BCCP) and then the CO(2) group is transferred by the carboxyltransferase to acetyl-CoA to form malonyl-CoA. This is Acetyl-coenzyme A carboxylase carboxyl transferase subunit alpha from Vibrio parahaemolyticus serotype O3:K6 (strain RIMD 2210633).